The sequence spans 326 residues: Probable cell division protein WhiA (326 aa).

A DNA-binding region (H-T-H motif) is located at residues 275–308 (SLEELGQLADPPLTKDAIAGRIRRLLAMADKRAA).

The protein belongs to the WhiA family.

In terms of biological role, involved in cell division and chromosome segregation. The sequence is that of Probable cell division protein WhiA from Thermobifida fusca (strain YX).